A 479-amino-acid polypeptide reads, in one-letter code: Ribulose bisphosphate carboxylase large chain 2 (479 aa).

N116 and T166 together coordinate substrate. K168 functions as the Proton acceptor in the catalytic mechanism. K170 lines the substrate pocket. K194, D196, and E197 together coordinate Mg(2+). K194 carries the N6-carboxylysine modification. The active-site Proton acceptor is the H287. 3 residues coordinate substrate: R288, H320, and S372.

This sequence belongs to the RuBisCO large chain family. Type I subfamily. Heterohexadecamer of 8 large chains and 8 small chains. Requires Mg(2+) as cofactor.

The enzyme catalyses 2 (2R)-3-phosphoglycerate + 2 H(+) = D-ribulose 1,5-bisphosphate + CO2 + H2O. The catalysed reaction is D-ribulose 1,5-bisphosphate + O2 = 2-phosphoglycolate + (2R)-3-phosphoglycerate + 2 H(+). Functionally, ruBisCO catalyzes two reactions: the carboxylation of D-ribulose 1,5-bisphosphate, the primary event in carbon dioxide fixation, as well as the oxidative fragmentation of the pentose substrate. Both reactions occur simultaneously and in competition at the same active site. This chain is Ribulose bisphosphate carboxylase large chain 2, found in Bradyrhizobium sp. (strain ORS 278).